Reading from the N-terminus, the 176-residue chain is Inorganic pyrophosphatase (176 aa).

Substrate-binding residues include Lys-31, Arg-45, and Tyr-57. Asp-67, Asp-72, and Asp-104 together coordinate Mg(2+). Tyr-141 lines the substrate pocket.

It belongs to the PPase family. In terms of assembly, homohexamer. Requires Mg(2+) as cofactor.

Its subcellular location is the cytoplasm. The catalysed reaction is diphosphate + H2O = 2 phosphate + H(+). Functionally, catalyzes the hydrolysis of inorganic pyrophosphate (PPi) forming two phosphate ions. The sequence is that of Inorganic pyrophosphatase from Methanopyrus kandleri (strain AV19 / DSM 6324 / JCM 9639 / NBRC 100938).